Here is a 577-residue protein sequence, read N- to C-terminus: DEAD-box ATP-dependent RNA helicase 22 (577 aa).

A Q motif motif is present at residues 82–110 (TSWESLGVSDRLASALHGAGLARPSLVQA). Residues 113 to 375 (IPHVLTTNDV…GGVLKRMFPN (263 aa)) form the Helicase ATP-binding domain. 126 to 133 (AETGSGKT) is a binding site for ATP. The short motif at 249–252 (DEAD) is the DEAD box element. The segment at 288 to 317 (SLGDTNEYREDSDSQSAELSADDEENEDGL) is disordered. In terms of domain architecture, Helicase C-terminal spans 407-568 (LLDAVKYGLK…SFRNKLKKQA (162 aa)).

Belongs to the DEAD box helicase family.

It catalyses the reaction ATP + H2O = ADP + phosphate + H(+). The sequence is that of DEAD-box ATP-dependent RNA helicase 22 from Oryza sativa subsp. japonica (Rice).